The sequence spans 626 residues: ATP-dependent rRNA helicase spb4 (626 aa).

A Q motif motif is present at residues 14 to 42 (WDALTPSLAEWVLDAISSMGFEKMTPVQA). The Helicase ATP-binding domain maps to 45-246 (IPLFMGNKDV…RVGLRNPVKI (202 aa)). 58-65 (AVTGSGKT) provides a ligand contact to ATP. The short motif at 194 to 197 (DEAD) is the DEAD box element. Residues 279-437 (ALLSLLSQLE…TTGEAAKILI (159 aa)) form the Helicase C-terminal domain. Residues 553-599 (QREAWSQKHEKQDLKELKREKKKRKREIERLEKMTDEEKKEEQAKEK) are disordered. 2 stretches are compositionally biased toward basic and acidic residues: residues 554–571 (REAW…ELKR) and 578–599 (REIE…AKEK). Positions 558 to 620 (SQKHEKQDLK…RKIEDDADVE (63 aa)) form a coiled coil.

This sequence belongs to the DEAD box helicase family. DDX55/SPB4 subfamily. In terms of assembly, component of pre-60S ribosomal complexes.

It is found in the nucleus. The protein localises to the nucleolus. The catalysed reaction is ATP + H2O = ADP + phosphate + H(+). Functionally, ATP-binding RNA helicase involved in the biogenesis of 60S ribosomal subunits. Binds 90S pre-ribosomal particles and dissociates from pre-60S ribosomal particles after processing of 27SB pre-rRNA. Required for the normal formation of 18S rRNA through the processing of pre-rRNAs at sites A0, A1 and A2, and the normal formation of 25S and 5.8S rRNAs through the processing of pre-rRNAs at sites C1 and C2. In Botryotinia fuckeliana (strain B05.10) (Noble rot fungus), this protein is ATP-dependent rRNA helicase spb4.